A 630-amino-acid polypeptide reads, in one-letter code: Replication protein E1 (630 aa).

Residues 26-46 (RKTGDTISDDESEEENETDTD) are disordered. Positions 32–46 (ISDDESEEENETDTD) are enriched in acidic residues. Residues 86-88 (KRK) carry the Nuclear localization signal motif. S92 is subject to Phosphoserine; by host. A disordered region spans residues 136–166 (EKGNGCGSSQNGGSQNSNCSEHSVSNMDIDT). The segment covering 142–155 (GSSQNGGSQNSNCS) has biased composition (low complexity). Residues 156–166 (EHSVSNMDIDT) are compositionally biased toward polar residues. Residues 167–333 (NMETPTHQLQ…QTQLQHSLQD (167 aa)) are DNA-binding region. The SF3 helicase domain occupies 432–582 (VDFISFLSYF…FPLDNNGNPV (151 aa)). Residue 458–465 (GPPNTGKS) coordinates ATP. K539 is covalently cross-linked (Glycyl lysine isopeptide (Lys-Gly) (interchain with G-Cter in SUMO)).

It belongs to the papillomaviridae E1 protein family. In terms of assembly, can form hexamers. Interacts with E2 protein; this interaction increases E1 DNA binding specificity. Interacts with host DNA polymerase subunit POLA2. Interacts with host single stranded DNA-binding protein RPA1. Interacts with host TOP1; this interaction stimulates the enzymatic activity of TOP1. Post-translationally, phosphorylated. Sumoylated.

It is found in the host nucleus. The catalysed reaction is Couples ATP hydrolysis with the unwinding of duplex DNA by translocating in the 3'-5' direction.. It catalyses the reaction ATP + H2O = ADP + phosphate + H(+). In terms of biological role, ATP-dependent DNA 3'-5' helicase required for initiation of viral DNA replication. It forms a complex with the viral E2 protein. The E1-E2 complex binds to the replication origin which contains binding sites for both proteins. During the initial step, a dimer of E1 interacts with a dimer of protein E2 leading to a complex that binds the viral origin of replication with high specificity. Then, a second dimer of E1 displaces the E2 dimer in an ATP-dependent manner to form the E1 tetramer. Following this, two E1 monomers are added to each half of the site, which results in the formation of two E1 trimers on the viral ori. Subsequently, two hexamers will be created. The double hexamer acts as a bi-directional helicase machinery and unwinds the viral DNA and then recruits the host DNA polymerase to start replication. The chain is Replication protein E1 from Homo sapiens (Human).